A 65-amino-acid chain; its full sequence is Large ribosomal subunit protein bL32 (65 aa).

Basic residues predominate over residues 1-19; the sequence is MAVQKSRKTPSKRGMRRSH. A disordered region spans residues 1-32; the sequence is MAVQKSRKTPSKRGMRRSHNALTNPTLSEDQE.

Belongs to the bacterial ribosomal protein bL32 family.

This is Large ribosomal subunit protein bL32 from Ruthia magnifica subsp. Calyptogena magnifica.